Here is a 343-residue protein sequence, read N- to C-terminus: Ribosomal RNA small subunit methyltransferase C (343 aa).

It belongs to the methyltransferase superfamily. RsmC family. Monomer.

Its subcellular location is the cytoplasm. The enzyme catalyses guanosine(1207) in 16S rRNA + S-adenosyl-L-methionine = N(2)-methylguanosine(1207) in 16S rRNA + S-adenosyl-L-homocysteine + H(+). Specifically methylates the guanine in position 1207 of 16S rRNA in the 30S particle. This Escherichia coli (strain K12 / DH10B) protein is Ribosomal RNA small subunit methyltransferase C.